We begin with the raw amino-acid sequence, 983 residues long: Probable beta-galactosidase C (983 aa).

An N-terminal signal peptide occupies residues 1 to 23; it reads MRIFSFLFLLLLGILTGQGLVSG. Substrate-binding residues include Y82, N127, A128, E129, and N187. E188 functions as the Proton donor in the catalytic mechanism. N-linked (GlcNAc...) asparagine glycosylation occurs at N197. Y251 is a substrate binding site. Cysteines 257 and 304 form a disulfide. An N-linked (GlcNAc...) asparagine glycan is attached at N276. E287 functions as the Nucleophile in the catalytic mechanism. A substrate-binding site is contributed by Y353. N391, N434, N466, N516, N601, N676, N714, N719, and N804 each carry an N-linked (GlcNAc...) asparagine glycan.

The protein belongs to the glycosyl hydrolase 35 family.

The protein localises to the secreted. The enzyme catalyses Hydrolysis of terminal non-reducing beta-D-galactose residues in beta-D-galactosides.. Functionally, cleaves beta-linked terminal galactosyl residues from gangliosides, glycoproteins, and glycosaminoglycans. The polypeptide is Probable beta-galactosidase C (lacC) (Neosartorya fischeri (strain ATCC 1020 / DSM 3700 / CBS 544.65 / FGSC A1164 / JCM 1740 / NRRL 181 / WB 181) (Aspergillus fischerianus)).